A 264-amino-acid chain; its full sequence is S-methyl-5'-thioadenosine phosphorylase (264 aa).

Phosphate-binding positions include serine 14 and 55-56; that span reads RH. A substrate-binding site is contributed by methionine 180. Threonine 181 serves as a coordination point for phosphate. 204-206 is a substrate binding site; it reads DVD.

It belongs to the PNP/MTAP phosphorylase family. MTAP subfamily. Homodimer.

The enzyme catalyses S-methyl-5'-thioadenosine + phosphate = 5-(methylsulfanyl)-alpha-D-ribose 1-phosphate + adenine. It participates in amino-acid biosynthesis; L-methionine biosynthesis via salvage pathway; S-methyl-5-thio-alpha-D-ribose 1-phosphate from S-methyl-5'-thioadenosine (phosphorylase route): step 1/1. Not inhibited by adenosine, potently inhibited by MT-DADMe-immucillin A. Functionally, catalyzes the reversible phosphorylation of S-methyl-5'-thioadenosine (MTA) to adenine and 5-methylthioribose-1-phosphate. Involved in the breakdown of MTA, a major by-product of polyamine biosynthesis. Responsible for the first step in the methionine salvage pathway after MTA has been generated from S-adenosylmethionine. Prefers MTA, with 2% activity on adenosine, 0.8% activity on S-adenosyl-L-homocysteine and no activity on other tested nucleosides. This chain is S-methyl-5'-thioadenosine phosphorylase, found in Mycobacterium tuberculosis (strain ATCC 25618 / H37Rv).